We begin with the raw amino-acid sequence, 201 residues long: Probable molybdenum cofactor guanylyltransferase (201 aa).

Residues 20-22 (LAG), lysine 32, aspartate 77, and aspartate 106 contribute to the GTP site. A Mg(2+)-binding site is contributed by aspartate 106.

Belongs to the MobA family. It depends on Mg(2+) as a cofactor.

The protein localises to the cytoplasm. The catalysed reaction is Mo-molybdopterin + GTP + H(+) = Mo-molybdopterin guanine dinucleotide + diphosphate. Functionally, transfers a GMP moiety from GTP to Mo-molybdopterin (Mo-MPT) cofactor (Moco or molybdenum cofactor) to form Mo-molybdopterin guanine dinucleotide (Mo-MGD) cofactor. This Aquifex aeolicus (strain VF5) protein is Probable molybdenum cofactor guanylyltransferase.